Here is a 284-residue protein sequence, read N- to C-terminus: 4-hydroxybenzoate octaprenyltransferase (284 aa).

Transmembrane regions (helical) follow at residues 19 to 39 (IPIL…SHGL), 42 to 62 (ISYL…GCII), 85 to 105 (GQLS…VAFI), 107 to 127 (VLFL…LAIL), 134 to 154 (FFAI…FMAF), 165 to 185 (AWIF…IYAL), 211 to 231 (ILLF…YCDF), 233 to 253 (SFFY…YFLY), and 261 to 281 (CINA…IAVI).

Belongs to the UbiA prenyltransferase family. Mg(2+) serves as cofactor.

The protein resides in the cell inner membrane. It catalyses the reaction all-trans-octaprenyl diphosphate + 4-hydroxybenzoate = 4-hydroxy-3-(all-trans-octaprenyl)benzoate + diphosphate. It participates in cofactor biosynthesis; ubiquinone biosynthesis. Catalyzes the prenylation of para-hydroxybenzoate (PHB) with an all-trans polyprenyl group. Mediates the second step in the final reaction sequence of ubiquinone-8 (UQ-8) biosynthesis, which is the condensation of the polyisoprenoid side chain with PHB, generating the first membrane-bound Q intermediate 3-octaprenyl-4-hydroxybenzoate. This is 4-hydroxybenzoate octaprenyltransferase from Francisella tularensis subsp. holarctica (strain LVS).